Reading from the N-terminus, the 176-residue chain is MSKVKKNDETLSEVLVDVNRVTKVVKGGRSFAFSAYVVVGDKAGRVGAGHGKAKEVNEARGKAKQAAKKRMMKVPLYQNRTIHHDVVGKSGAAKVILRRAKAGTGIIAGGSMRAIFDSLGVHDIVAKSIGSTNVYAMISATFDALNKLASPKSIAMRRDKKVNEISVKSAEIQVNE.

The S5 DRBM domain maps to 11-74 (LSEVLVDVNR…QAAKKRMMKV (64 aa)).

The protein belongs to the universal ribosomal protein uS5 family. As to quaternary structure, part of the 30S ribosomal subunit. Contacts proteins S4 and S8.

Functionally, with S4 and S12 plays an important role in translational accuracy. In terms of biological role, located at the back of the 30S subunit body where it stabilizes the conformation of the head with respect to the body. The protein is Small ribosomal subunit protein uS5 of Rickettsia conorii (strain ATCC VR-613 / Malish 7).